A 174-amino-acid chain; its full sequence is Vimentin-type intermediate filament-associated coiled-coil protein (174 aa).

Positions 7 to 97 form a coiled coil; sequence LQIREANAHL…DQRDQMIQQL (91 aa). The interval 128–174 is disordered; the sequence is GPLPASHSHRAQLLPDGPGPPLGNNMGKEEGQDDQDDQQPAVFGTTV.

It localises to the cytoplasm. The chain is Vimentin-type intermediate filament-associated coiled-coil protein (Vmac) from Mus musculus (Mouse).